Reading from the N-terminus, the 140-residue chain is MWLQNLLLLGTVVCSICAPTDLLSPVTQSWKHVDATINEALSLLNHTSDPAAVMNETVEVVYDQFEPQEPTCLQTRLALFMKGLRGNLTRLEGSLTLMANFYKQHCPPTPETSCMTQIITFKSFKENLKRFLFAIPFDCW.

Positions 1–17 are cleaved as a signal peptide; the sequence is MWLQNLLLLGTVVCSIC. Residue Ser-24 is glycosylated (O-linked (GalNAc...) serine). Residue Thr-27 is glycosylated (O-linked (GalNAc...) threonine). N-linked (GlcNAc...) asparagine glycosylation is found at Asn-45, Asn-55, and Asn-87. Cystine bridges form between Cys-72-Cys-114 and Cys-106-Cys-139.

It belongs to the GM-CSF family. In terms of assembly, monomer. The signaling GM-CSF receptor complex is a dodecamer of two head-to-head hexamers of two alpha, two beta, and two ligand subunits.

The protein resides in the secreted. Functionally, cytokine that stimulates the growth and differentiation of hematopoietic precursor cells from various lineages, including granulocytes, macrophages, eosinophils and erythrocytes. The protein is Granulocyte-macrophage colony-stimulating factor (CSF2) of Cavia porcellus (Guinea pig).